We begin with the raw amino-acid sequence, 225 residues long: NAD(P)H-quinone oxidoreductase subunit K, chloroplastic (225 aa).

[4Fe-4S] cluster contacts are provided by Cys43, Cys44, Cys108, and Cys139.

Belongs to the complex I 20 kDa subunit family. NDH is composed of at least 16 different subunits, 5 of which are encoded in the nucleus. Requires [4Fe-4S] cluster as cofactor.

The protein resides in the plastid. Its subcellular location is the chloroplast thylakoid membrane. It catalyses the reaction a plastoquinone + NADH + (n+1) H(+)(in) = a plastoquinol + NAD(+) + n H(+)(out). It carries out the reaction a plastoquinone + NADPH + (n+1) H(+)(in) = a plastoquinol + NADP(+) + n H(+)(out). Its function is as follows. NDH shuttles electrons from NAD(P)H:plastoquinone, via FMN and iron-sulfur (Fe-S) centers, to quinones in the photosynthetic chain and possibly in a chloroplast respiratory chain. The immediate electron acceptor for the enzyme in this species is believed to be plastoquinone. Couples the redox reaction to proton translocation, and thus conserves the redox energy in a proton gradient. This is NAD(P)H-quinone oxidoreductase subunit K, chloroplastic from Triticum aestivum (Wheat).